The primary structure comprises 446 residues: D-inositol 3-phosphate glycosyltransferase (446 aa).

Position 19 (H19) interacts with 1D-myo-inositol 3-phosphate. UDP-N-acetyl-alpha-D-glucosamine contacts are provided by residues 25 to 26 (QP) and G33. 1D-myo-inositol 3-phosphate-binding positions include 30–35 (DAGGMN), K88, Y121, T145, and R165. Residues R239, K244, and Q303 each contribute to the UDP-N-acetyl-alpha-D-glucosamine site. Positions 312, 313, and 315 each coordinate Mg(2+). The UDP-N-acetyl-alpha-D-glucosamine site is built by E325 and E333. Mg(2+) is bound at residue T339.

The protein belongs to the glycosyltransferase group 1 family. MshA subfamily. As to quaternary structure, homodimer.

It catalyses the reaction 1D-myo-inositol 3-phosphate + UDP-N-acetyl-alpha-D-glucosamine = 1D-myo-inositol 2-acetamido-2-deoxy-alpha-D-glucopyranoside 3-phosphate + UDP + H(+). Functionally, catalyzes the transfer of a N-acetyl-glucosamine moiety to 1D-myo-inositol 3-phosphate to produce 1D-myo-inositol 2-acetamido-2-deoxy-glucopyranoside 3-phosphate in the mycothiol biosynthesis pathway. The chain is D-inositol 3-phosphate glycosyltransferase from Rhodococcus opacus (strain B4).